The sequence spans 211 residues: Protein-L-isoaspartate O-methyltransferase (211 aa).

Residue Ser-62 is part of the active site.

This sequence belongs to the methyltransferase superfamily. L-isoaspartyl/D-aspartyl protein methyltransferase family.

Its subcellular location is the cytoplasm. It catalyses the reaction [protein]-L-isoaspartate + S-adenosyl-L-methionine = [protein]-L-isoaspartate alpha-methyl ester + S-adenosyl-L-homocysteine. In terms of biological role, catalyzes the methyl esterification of L-isoaspartyl residues in peptides and proteins that result from spontaneous decomposition of normal L-aspartyl and L-asparaginyl residues. It plays a role in the repair and/or degradation of damaged proteins. This chain is Protein-L-isoaspartate O-methyltransferase, found in Shewanella woodyi (strain ATCC 51908 / MS32).